The following is a 151-amino-acid chain: Superoxide dismutase [Cu-Zn] (151 aa).

Cys-6 is lipidated: S-palmitoyl cysteine. Residues His-45, His-47, and His-62 each contribute to the Cu cation site. A disulfide bridge connects residues Cys-56 and Cys-144. Residues His-62, His-70, His-79, and Asp-82 each contribute to the Zn(2+) site. Residue His-118 coordinates Cu cation.

Belongs to the Cu-Zn superoxide dismutase family. As to quaternary structure, homodimer. Cu cation serves as cofactor. The cofactor is Zn(2+).

It localises to the cytoplasm. Its subcellular location is the nucleus. The enzyme catalyses 2 superoxide + 2 H(+) = H2O2 + O2. Destroys radicals which are normally produced within the cells and which are toxic to biological systems. The protein is Superoxide dismutase [Cu-Zn] (sod1) of Xenopus tropicalis (Western clawed frog).